We begin with the raw amino-acid sequence, 36 residues long: DKCSPSGAICSGFGPPEQCCSGACVPHPILRIFVCQ.

3 cysteine pairs are disulfide-bonded: C3–C20, C10–C24, and C19–C35.

Trypsin inhibitor. This Spinacia oleracea (Spinach) protein is Trypsin inhibitor 2.